The chain runs to 221 residues: Fructokinase (221 aa).

The protein belongs to the carbohydrate kinase PfkB family.

The catalysed reaction is D-fructose + ATP = D-fructose 6-phosphate + ADP + H(+). The protein is Fructokinase (scrK) of Salmonella thompson.